A 229-amino-acid chain; its full sequence is Type-5 uracil-DNA glycosylase (229 aa).

[4Fe-4S] cluster-binding residues include C19, C22, C123, and C138.

The protein belongs to the uracil-DNA glycosylase (UDG) superfamily. Type 5 (UDGb) family.

DNA glycosylase with broad substrate specificity. This chain is Type-5 uracil-DNA glycosylase, found in Mycobacterium leprae (strain TN).